The primary structure comprises 294 residues: Protein C3orf33 (294 aa).

Alanine 2 is modified (N-acetylalanine). Residues 40-56 form a helical membrane-spanning segment; sequence ISTGMAIAGIMLLLRSI.

In terms of tissue distribution, highly expressed in ileocecal tissue and endometrium.

It localises to the membrane. The protein localises to the secreted. Secreted protein may play a role in transcription regulation via the MAPK3/MAPK1 pathway through an unidentified receptor on the plasma membrane. In Homo sapiens (Human), this protein is Protein C3orf33 (C3orf33).